Here is a 234-residue protein sequence, read N- to C-terminus: 7-cyano-7-deazaguanine synthase (234 aa).

Position 7 to 17 (7 to 17 (LSGGLDSAVCM)) interacts with ATP. Zn(2+) contacts are provided by C197, C208, C211, and C214.

This sequence belongs to the QueC family. The cofactor is Zn(2+).

It carries out the reaction 7-carboxy-7-deazaguanine + NH4(+) + ATP = 7-cyano-7-deazaguanine + ADP + phosphate + H2O + H(+). The protein operates within purine metabolism; 7-cyano-7-deazaguanine biosynthesis. Catalyzes the ATP-dependent conversion of 7-carboxy-7-deazaguanine (CDG) to 7-cyano-7-deazaguanine (preQ(0)). The protein is 7-cyano-7-deazaguanine synthase of Methanococcus aeolicus (strain ATCC BAA-1280 / DSM 17508 / OCM 812 / Nankai-3).